We begin with the raw amino-acid sequence, 280 residues long: 2-dehydro-3-deoxyphosphooctonate aldolase (280 aa).

The protein belongs to the KdsA family.

The protein resides in the cytoplasm. The catalysed reaction is D-arabinose 5-phosphate + phosphoenolpyruvate + H2O = 3-deoxy-alpha-D-manno-2-octulosonate-8-phosphate + phosphate. It functions in the pathway carbohydrate biosynthesis; 3-deoxy-D-manno-octulosonate biosynthesis; 3-deoxy-D-manno-octulosonate from D-ribulose 5-phosphate: step 2/3. It participates in bacterial outer membrane biogenesis; lipopolysaccharide biosynthesis. The protein is 2-dehydro-3-deoxyphosphooctonate aldolase of Colwellia psychrerythraea (strain 34H / ATCC BAA-681) (Vibrio psychroerythus).